The chain runs to 354 residues: Phosphoribosylformylglycinamidine cyclo-ligase (354 aa).

The protein belongs to the AIR synthase family.

It is found in the cytoplasm. It carries out the reaction 2-formamido-N(1)-(5-O-phospho-beta-D-ribosyl)acetamidine + ATP = 5-amino-1-(5-phospho-beta-D-ribosyl)imidazole + ADP + phosphate + H(+). It participates in purine metabolism; IMP biosynthesis via de novo pathway; 5-amino-1-(5-phospho-D-ribosyl)imidazole from N(2)-formyl-N(1)-(5-phospho-D-ribosyl)glycinamide: step 2/2. This chain is Phosphoribosylformylglycinamidine cyclo-ligase, found in Marinobacter nauticus (strain ATCC 700491 / DSM 11845 / VT8) (Marinobacter aquaeolei).